The chain runs to 202 residues: Adenosylcobalamin/alpha-ribazole phosphatase (202 aa).

The active-site Tele-phosphohistidine intermediate is His8. The active-site Proton donor/acceptor is the Glu81.

The protein belongs to the phosphoglycerate mutase family.

The enzyme catalyses adenosylcob(III)alamin 5'-phosphate + H2O = adenosylcob(III)alamin + phosphate. It carries out the reaction alpha-ribazole 5'-phosphate + H2O = alpha-ribazole + phosphate. It participates in nucleoside biosynthesis; alpha-ribazole biosynthesis; alpha-ribazole from 5,6-dimethylbenzimidazole: step 2/2. Functionally, catalyzes the conversion of adenosylcobalamin 5'-phosphate to adenosylcobalamin (vitamin B12); involved in the assembly of the nucleotide loop of cobalamin. Also catalyzes the hydrolysis of the phospho group from alpha-ribazole 5'-phosphate to form alpha-ribazole. This is Adenosylcobalamin/alpha-ribazole phosphatase (cobC) from Salmonella typhi.